Consider the following 225-residue polypeptide: Uracil-DNA glycosylase (225 aa).

Catalysis depends on Asp-65, which acts as the Proton acceptor.

This sequence belongs to the uracil-DNA glycosylase (UDG) superfamily. UNG family.

The protein localises to the cytoplasm. It carries out the reaction Hydrolyzes single-stranded DNA or mismatched double-stranded DNA and polynucleotides, releasing free uracil.. In terms of biological role, excises uracil residues from the DNA which can arise as a result of misincorporation of dUMP residues by DNA polymerase or due to deamination of cytosine. This is Uracil-DNA glycosylase from Bacillus cereus (strain G9842).